The sequence spans 461 residues: uncharacterized protein (461 aa).

This is an uncharacterized protein from Saccharomyces cerevisiae (strain ATCC 204508 / S288c) (Baker's yeast).